Consider the following 236-residue polypeptide: Ascorbate-specific transmembrane electron transporter 1 (236 aa).

The Cytoplasmic portion of the chain corresponds to Met1–Pro11. A helical membrane pass occupies residues Phe12–Ile32. One can recognise a Cytochrome b561 domain in the interval Ala15–Ile219. Residues Gln33 to Asn50 are Extracellular-facing. Residues Val51 to Tyr71 traverse the membrane as a helical segment. His52 provides a ligand contact to heme b. Ala67–Pro75 contributes to the L-ascorbate binding site. Residues Arg72–Leu84 lie on the Cytoplasmic side of the membrane. A helical transmembrane segment spans residues Ile85 to Phe105. His86 and His120 together coordinate heme b. Topologically, residues Lys106–Trp122 are extracellular. Residue Leu116–Ile125 coordinates monodehydro-L-ascorbate radical. A helical membrane pass occupies residues Ile123–Phe143. At Phe144–Lys153 the chain is on the cytoplasmic side. A helical membrane pass occupies residues Gly154–Ala174. His159 contributes to the heme b binding site. Residues Glu175 to Asn201 are Extracellular-facing. The helical transmembrane segment at Phe202–Val222 threads the bilayer. The Cytoplasmic segment spans residues Arg223–Asn236.

Heme b serves as cofactor.

It is found in the membrane. Its activity is regulated as follows. Inhibited by diethylpyrocarbonate. Functionally, two-heme-containing cytochrome. Catalyzes ascorbate-dependent trans-membrane electron transfer by utilizing a concerted H(+)/e(-) transfer mechanism. This chain is Ascorbate-specific transmembrane electron transporter 1 (ZCYB), found in Zea mays (Maize).